The chain runs to 95 residues: Defensin-like protein 247 (95 aa).

An N-terminal signal peptide occupies residues 1–24 (MKFAAIFLVTCVFFSLFSSNLSQG). 4 disulfide bridges follow: C37-C94, C48-C77, C56-C87, and C75-C89.

Belongs to the DEFL family.

It localises to the secreted. This Arabidopsis thaliana (Mouse-ear cress) protein is Defensin-like protein 247 (SCRL6).